The sequence spans 20 residues: Dermaseptin-N1 (20 aa).

A Leucine amide modification is found at leucine 20.

In terms of tissue distribution, expressed by the skin glands.

Its subcellular location is the secreted. Antimicrobial peptide with moderate activity against both Gram-positive and Gram-negative bacteria, and important activity against Leishmania species (L.amazonensis and L.infantum). Acts on both Leishmania promastigote and amastigote forms. Shows activity against E.coli (MIC=17.8 uM), S.aureus (MIC=32.3 uM) and the phytopathogenic bacterium Xanthomonas axonopodis (MIC=2 uM). Shows low cytotoxicity against mammalian cells in models of peritoneal macrophages. The polypeptide is Dermaseptin-N1 (Pithecopus nordestinus (Northeastern Brazilian leaf frog)).